The chain runs to 155 residues: Small ribosomal subunit protein uS9 (155 aa).

Belongs to the universal ribosomal protein uS9 family.

This chain is Small ribosomal subunit protein uS9, found in Rhizobium johnstonii (strain DSM 114642 / LMG 32736 / 3841) (Rhizobium leguminosarum bv. viciae).